Consider the following 581-residue polypeptide: NADH-quinone oxidoreductase subunit C/D (581 aa).

The tract at residues 1–172 (MSAFELVTEL…PLFNMTASLF (172 aa)) is NADH dehydrogenase I subunit C. Residues 196 to 581 (ELMILNYGPH…IDYVMSDVDR (386 aa)) form an NADH dehydrogenase I subunit D region.

The protein in the N-terminal section; belongs to the complex I 30 kDa subunit family. This sequence in the C-terminal section; belongs to the complex I 49 kDa subunit family. As to quaternary structure, NDH-1 is composed of 13 different subunits. Subunits NuoB, CD, E, F, and G constitute the peripheral sector of the complex.

The protein resides in the cell inner membrane. The enzyme catalyses a quinone + NADH + 5 H(+)(in) = a quinol + NAD(+) + 4 H(+)(out). NDH-1 shuttles electrons from NADH, via FMN and iron-sulfur (Fe-S) centers, to quinones in the respiratory chain. The immediate electron acceptor for the enzyme in this species is believed to be ubiquinone. Couples the redox reaction to proton translocation (for every two electrons transferred, four hydrogen ions are translocated across the cytoplasmic membrane), and thus conserves the redox energy in a proton gradient. The protein is NADH-quinone oxidoreductase subunit C/D of Rhodopseudomonas palustris (strain ATCC BAA-98 / CGA009).